The chain runs to 290 residues: Elongation factor Ts (290 aa).

The interval 82-85 is involved in Mg(2+) ion dislocation from EF-Tu; it reads TDFV.

The protein belongs to the EF-Ts family.

It localises to the cytoplasm. Associates with the EF-Tu.GDP complex and induces the exchange of GDP to GTP. It remains bound to the aminoacyl-tRNA.EF-Tu.GTP complex up to the GTP hydrolysis stage on the ribosome. This chain is Elongation factor Ts, found in Thiobacillus denitrificans (strain ATCC 25259 / T1).